A 182-amino-acid chain; its full sequence is Hypoxanthine/guanine phosphoribosyltransferase (182 aa).

It belongs to the purine/pyrimidine phosphoribosyltransferase family. Archaeal HPRT subfamily. Homodimer.

It localises to the cytoplasm. The catalysed reaction is IMP + diphosphate = hypoxanthine + 5-phospho-alpha-D-ribose 1-diphosphate. It catalyses the reaction GMP + diphosphate = guanine + 5-phospho-alpha-D-ribose 1-diphosphate. It participates in purine metabolism; IMP biosynthesis via salvage pathway; IMP from hypoxanthine: step 1/1. Its function is as follows. Catalyzes a salvage reaction resulting in the formation of IMP that is energically less costly than de novo synthesis. In Methanospirillum hungatei JF-1 (strain ATCC 27890 / DSM 864 / NBRC 100397 / JF-1), this protein is Hypoxanthine/guanine phosphoribosyltransferase.